The following is a 513-amino-acid chain: NAD(P)H-quinone oxidoreductase subunit 2, chloroplastic (513 aa).

Transmembrane regions (helical) follow at residues 11–31 (NLIT…ILMI), 38–58 (SVWL…ILLF), 78–98 (GFTI…IPLS), 112–132 (FLIL…ANDL), 133–153 (VTIF…AGQA), 167–187 (LLMG…LYGL), 219–239 (FGAL…GFKI), 256–276 (PTPV…ALAT), 290–310 (WHIV…LIAA), 318–338 (MLAY…LVGN), 348–368 (YLLI…IFGL), 389–409 (AFAL…AGFF), 422–442 (HLYL…YYYL), and 478–498 (LGLT…NPLI).

This sequence belongs to the complex I subunit 2 family. As to quaternary structure, NDH is composed of at least 16 different subunits, 5 of which are encoded in the nucleus.

The protein localises to the plastid. The protein resides in the chloroplast thylakoid membrane. It catalyses the reaction a plastoquinone + NADH + (n+1) H(+)(in) = a plastoquinol + NAD(+) + n H(+)(out). It carries out the reaction a plastoquinone + NADPH + (n+1) H(+)(in) = a plastoquinol + NADP(+) + n H(+)(out). NDH shuttles electrons from NAD(P)H:plastoquinone, via FMN and iron-sulfur (Fe-S) centers, to quinones in the photosynthetic chain and possibly in a chloroplast respiratory chain. The immediate electron acceptor for the enzyme in this species is believed to be plastoquinone. Couples the redox reaction to proton translocation, and thus conserves the redox energy in a proton gradient. The polypeptide is NAD(P)H-quinone oxidoreductase subunit 2, chloroplastic (Staurastrum punctulatum (Green alga)).